The primary structure comprises 130 residues: Small ribosomal subunit protein uS9 (130 aa).

This sequence belongs to the universal ribosomal protein uS9 family.

The protein is Small ribosomal subunit protein uS9 of Clostridium perfringens (strain ATCC 13124 / DSM 756 / JCM 1290 / NCIMB 6125 / NCTC 8237 / Type A).